A 502-amino-acid polypeptide reads, in one-letter code: Cytochrome P450 71A8 (502 aa).

A helical membrane pass occupies residues 16 to 36 (IISHTLAFQALVSLILLISIT). Residues 93–119 (PVSSRRRPRGNHENSRSRLRRPRGSRS) form a disordered region. Cys-447 is a binding site for heme.

The protein belongs to the cytochrome P450 family. Requires heme as cofactor.

Its subcellular location is the membrane. This is Cytochrome P450 71A8 (CYP71A8) from Mentha piperita (Peppermint).